Here is a 300-residue protein sequence, read N- to C-terminus: Putative hydro-lyase Dshi_3152 (300 aa).

This sequence belongs to the D-glutamate cyclase family.

This chain is Putative hydro-lyase Dshi_3152, found in Dinoroseobacter shibae (strain DSM 16493 / NCIMB 14021 / DFL 12).